Reading from the N-terminus, the 375-residue chain is Probable G-protein coupled receptor 34 (375 aa).

At 1-54 the chain is on the extracellular side; it reads MTTTSVDSWLCSSHGMHFITNYSDQASQNFSGVPNVTSCPMDEKLLSTVLTTFY. 3 N-linked (GlcNAc...) asparagine glycosylation sites follow: asparagine 21, asparagine 29, and asparagine 35. The chain crosses the membrane as a helical span at residues 55–75; that stretch reads SVIFLVGLVGNIIALYVFLGI. The Cytoplasmic segment spans residues 76-81; it reads HRKRNS. A helical transmembrane segment spans residues 82–102; sequence IQIYLLNVAVADLLLIFCLPF. The Extracellular segment spans residues 103–121; sequence RIMYHINQNKWTLGVILCK. Cysteine 120 and cysteine 197 are joined by a disulfide. Residues 122–142 form a helical membrane-spanning segment; it reads VVGTLFYMNMYISIILLGFIS. Over 143–164 the chain is Cytoplasmic; that stretch reads LDRYIKINRSIQQRRAITTKQS. A helical transmembrane segment spans residues 165–185; the sequence is IYVCCIVWTVALAGFLTMIIL. The Extracellular portion of the chain corresponds to 186-209; the sequence is TLKKGGHNSTMCFHYRDRHNAKGE. Asparagine 193 carries N-linked (GlcNAc...) asparagine glycosylation. The chain crosses the membrane as a helical span at residues 210–230; that stretch reads AIFNFVLVVMFWLIFLLIILS. The Cytoplasmic portion of the chain corresponds to 231-262; it reads YIKIGKNLLRISKRRSKFPNSGKYATTARNSF. A helical transmembrane segment spans residues 263-283; the sequence is IVLIIFTICFVPYHAFRFIYI. The Extracellular portion of the chain corresponds to 284–303; that stretch reads SSQLNVSSCYWKEIIHKTNE. The N-linked (GlcNAc...) asparagine glycan is linked to asparagine 288. A helical transmembrane segment spans residues 304-324; that stretch reads IMLVFSSFNSCLDPVMYFLMS. Residues 325 to 375 lie on the Cytoplasmic side of the membrane; the sequence is SNIRKIMCQLLFRRFQSEASRSESTSEFKPGHSLHDLSVTVKMPQYSTKGN.

This sequence belongs to the G-protein coupled receptor 1 family. As to expression, highly expressed in glial cells such as astrocytes and microglia.

The protein localises to the cell membrane. Its function is as follows. G-protein-coupled receptor of lysophosphatidylserine (LysoPS) that plays different roles in immune response. Acts a damage-sensing receptor that triggers tissue repair upon recognition of dying neutrophils. Mechanistically, apoptotic neutrophils release lysophosphatydilserine that are recognized by type 3 innate lymphoid cells (ILC3s) via GPR34, which activates downstream PI3K-AKT and RAS-ERK signaling pathways leading to STAT3 activation and IL-22 production. Plays an important role in microglial function, controlling morphology and phagocytosis. The sequence is that of Probable G-protein coupled receptor 34 (Gpr34) from Mus musculus (Mouse).